A 129-amino-acid polypeptide reads, in one-letter code: UPF0102 protein CPS_4433 (129 aa).

The protein belongs to the UPF0102 family.

This chain is UPF0102 protein CPS_4433, found in Colwellia psychrerythraea (strain 34H / ATCC BAA-681) (Vibrio psychroerythus).